Reading from the N-terminus, the 153-residue chain is Arachidonate 5-lipoxygenase-activating protein (153 aa).

Topologically, residues 1–8 (MDQEAVGN) are lumenal. The chain crosses the membrane as a helical span at residues 9-30 (VVLLAIVTLISVVQNGFFAHKV). The Cytoplasmic segment spans residues 31 to 52 (EHESRNQNGRSFQRTGTLAFER). The helical transmembrane segment at 53–77 (VYTANQNCVDAYPTFLAVLWTAGLL) threads the bilayer. The Lumenal segment spans residues 78–80 (CSQ). Residues 81–102 (VPAAFAGLMYLFVRQKYFVGYL) form a helical membrane-spanning segment. The Cytoplasmic portion of the chain corresponds to 103 to 107 (GERTQ). An intramembrane segment occupies 108 to 115 (STPGYIFG). The chain crosses the membrane as a helical span at residues 116–128 (KRIILFLFLMSLA). Over 129–153 (GILNYCLILLFGSDFENYIKTISTT) the chain is Lumenal.

This sequence belongs to the MAPEG family. In terms of assembly, homotrimer. Interacts with LTC4S and ALOX5.

It localises to the nucleus membrane. The protein resides in the endoplasmic reticulum membrane. Required for leukotriene biosynthesis by ALOX5 (5-lipoxygenase). Anchors ALOX5 to the membrane. Binds arachidonic acid, and could play an essential role in the transfer of arachidonic acid to ALOX5. Binds to MK-886, a compound that blocks the biosynthesis of leukotrienes. The sequence is that of Arachidonate 5-lipoxygenase-activating protein (ALOX5AP) from Oryctolagus cuniculus (Rabbit).